The chain runs to 718 residues: DNA topoisomerase 1 (718 aa).

Residues H9–I151 form the Toprim domain. The Mg(2+) site is built by E15 and D113. Residues D162–L571 form the Topo IA-type catalytic domain. Residues S202–Q207 are interaction with DNA. Y320 (O-(5'-phospho-DNA)-tyrosine intermediate) is an active-site residue. The span at H361–P371 shows a compositional bias: basic and acidic residues. A disordered region spans residues H361–P380. 2 consecutive C4-type zinc fingers follow at residues C598–C626 and C680–C706.

Belongs to the type IA topoisomerase family. Monomer. It depends on Mg(2+) as a cofactor.

The enzyme catalyses ATP-independent breakage of single-stranded DNA, followed by passage and rejoining.. In terms of biological role, releases the supercoiling and torsional tension of DNA, which is introduced during the DNA replication and transcription, by transiently cleaving and rejoining one strand of the DNA duplex. Introduces a single-strand break via transesterification at a target site in duplex DNA. The scissile phosphodiester is attacked by the catalytic tyrosine of the enzyme, resulting in the formation of a DNA-(5'-phosphotyrosyl)-enzyme intermediate and the expulsion of a 3'-OH DNA strand. The free DNA strand then undergoes passage around the unbroken strand, thus removing DNA supercoils. Finally, in the religation step, the DNA 3'-OH attacks the covalent intermediate to expel the active-site tyrosine and restore the DNA phosphodiester backbone. This Methanothermobacter thermautotrophicus (strain ATCC 29096 / DSM 1053 / JCM 10044 / NBRC 100330 / Delta H) (Methanobacterium thermoautotrophicum) protein is DNA topoisomerase 1.